The primary structure comprises 242 residues: tRNA pseudouridine synthase A (242 aa).

Catalysis depends on Asp-51, which acts as the Nucleophile. Tyr-107 contacts substrate.

This sequence belongs to the tRNA pseudouridine synthase TruA family. Homodimer.

The enzyme catalyses uridine(38/39/40) in tRNA = pseudouridine(38/39/40) in tRNA. In terms of biological role, formation of pseudouridine at positions 38, 39 and 40 in the anticodon stem and loop of transfer RNAs. The polypeptide is tRNA pseudouridine synthase A (Helicobacter pylori (strain G27)).